Consider the following 11197-residue polypeptide: Nonribosomal peptide synthetase 5 (11197 aa).

The adenylation (A) domain 1 stretch occupies residues 19–413; the sequence is AQRARKQPDA…DGTLQVVGHK (395 aa). Positions 426–452 are disordered; it reads HASSSASSVGETPGVTGPISTPMGDSV. The condensation (C) domain 1 stretch occupies residues 690–897; that stretch reads KQLRQFCQEQ…LMDESMKQQI (208 aa). Residues 918–1310 are adenylation (A) domain 2; the sequence is DAAQDYPDAP…GRHDGQLKVR (393 aa). Positions 1446–1522 constitute a Carrier 1 domain; that stretch reads ADRSPVHMML…DMANNIAISE (77 aa). Ser-1483 bears the O-(pantetheine 4'-phosphoryl)serine mark. The segment at 1952 to 2380 is condensation (C) domain 2; sequence VEDVYPCSPV…SDISLMDPLS (429 aa). Positions 2406 to 2805 are adenylation (A) domain 3; sequence VARIEPDKMA…QRKDTQIKIR (400 aa). One can recognise a Carrier 2 domain in the interval 2945–3021; that stretch reads DSLTSTEVTI…SLAAFVDYDS (77 aa). The residue at position 2982 (Ser-2982) is an O-(pantetheine 4'-phosphoryl)serine. The epimerase (E) domain 1 stretch occupies residues 3041 to 3481; it reads EESFALSPIQ…TSTMKSEFTL (441 aa). Residues 3515–3957 are condensation (C) domain 3; the sequence is EEIFPCSPMQ…VSPETRCELD (443 aa). Residues 3976 to 4371 form an adenylation (A) domain 4 region; it reads FEQQVEKIPD…RRRDNQVKVR (396 aa). The 77-residue stretch at 4508 to 4584 folds into the Carrier 3 domain; the sequence is RKLTPMEQQL…ELANHARFKA (77 aa). Position 4545 is an O-(pantetheine 4'-phosphoryl)serine (Ser-4545). The tract at residues 4603–5022 is epimerase (E) domain 2; the sequence is FPLLPIQRMF…LNEYTAALRS (420 aa). The tract at residues 5069 to 5501 is condensation (C) domain 4; that stretch reads ESIYPCSPLQ…LVGDSERQGL (433 aa). The interval 5521–5918 is adenylation (A) domain 5; it reads EAQVKAIPDN…RRKDTQVKVR (398 aa). One can recognise a Carrier 4 domain in the interval 6068 to 6141; it reads SEAEDIIRAV…ALAQFVSQST (74 aa). Ser-6102 is subject to O-(pantetheine 4'-phosphoryl)serine. The interval 6162–6512 is epimerase (E) domain 3; that stretch reads FSLSPIQQMF…MEILFNYFGQ (351 aa). Positions 6636 to 7076 are condensation (C) domain 5; that stretch reads EEIFPCSPIQ…LVGAETRREM (441 aa). An adenylation (A) domain 6 region spans residues 7097–7491; the sequence is ERNSQAMPDR…RRRDNQVKVR (395 aa). A Carrier 5 domain is found at 7636 to 7712; sequence KPKTKMEEHF…DLAGRSRFKN (77 aa). The residue at position 7673 (Ser-7673) is an O-(pantetheine 4'-phosphoryl)serine. Residues 7733 to 8162 are epimerase (E) domain 4; it reads ALLPIQRLFF…KYMLETLASQ (430 aa). Residues 8205 to 8638 are condensation (C) domain 6; it reads EASYPCSPLQ…MLGDSGRKRI (434 aa). The adenylation (A) domain 7 stretch occupies residues 8660–8832; that stretch reads EAHVKESPNR…DHRATATEIV (173 aa). One can recognise a Carrier 6 domain in the interval 9173 to 9248; that stretch reads SAQTAVVQII…AMAAKAQQIG (76 aa). Position 9209 is an O-(pantetheine 4'-phosphoryl)serine (Ser-9209). The tract at residues 9565–9683 is epimerase (E) domain 5; that stretch reads RVKDMRRAIP…LHEVVSALQK (119 aa). Residues 9721-10116 form a condensation (C) domain 7 region; the sequence is VEDVYPTSPM…LVPAKHMEQL (396 aa). The segment at 10136-10529 is adenylation (A) domain 8; it reads DDMVRSTPTA…VGRKDTQIKI (394 aa). Residues 10663–10749 enclose the Carrier 7 domain; sequence LDSSDYVAMQ…TLAVTIKADM (87 aa). At Ser-10708 the chain carries O-(pantetheine 4'-phosphoryl)serine. A thioesterase (TE) domain region spans residues 10806 to 11104; it reads NFLVTGSTGF…SLRPMSGPEW (299 aa).

It belongs to the NRP synthetase family.

It participates in secondary metabolite biosynthesis. Functionally, nonribosomal peptide synthetase; part of the Fg3_54/C64 gene cluster that mediates the biosynthesis of the octapeptide fusaoctaxin A, a virulence factor that is required for cell-to-cell invasiveness of plant host. The 2 nonribosomal peptide synthetases NRPS9 and NRPS5 form an assembly line which likely utilizes GABA as a starter unit (loaded on the unique module M1 of NRPS9) and sequentially incorporates seven extender units composed of the residues L-Ala, L-allo-Ile, L-Ser, L-Val, L-Ser, L-Leu and L-Leu, respectively. During the process, each of the residues that are tethered on modules M3-M7 of NRPS5 containing an E domain can undergo an epimerization reaction to produce a D-configuration before the transpeptidation reaction occurs. The elongation of the peptidyl chain might be terminated by module M8-mediated L-Leu incorporation, followed by R domain-catalyzed 4 electron reduction to release the resulting octapeptide from the assembly line as an alcohol. Fusaoctaxin A is cleaved by the cluster specific ABC transporter FGM5 to the pentapeptide fusapentaxin A and the tripeptide fusatrixin A. The other enzymes from the cluster, FGM1, FGM2, FGM3 and FGM9 seem not to be involved in the biosynthesis of fusaoctaxin A and their functions have still to be determined. The polypeptide is Nonribosomal peptide synthetase 5 (Gibberella zeae (strain ATCC MYA-4620 / CBS 123657 / FGSC 9075 / NRRL 31084 / PH-1) (Wheat head blight fungus)).